A 719-amino-acid chain; its full sequence is Potassium-transporting ATPase ATP-binding subunit (719 aa).

4 helical membrane-spanning segments follow: residues 35–55 (LFVV…PGLF), 62–82 (VYYA…NYAE), 228–248 (ILLS…FFFG), and 254–274 (FVGG…VALM). Asp-318 serves as the catalytic 4-aspartylphosphate intermediate. ATP-binding residues include Asp-355 and Glu-359. The tract at residues 372-396 (GKVQTDGGQSASEELDEPGDSVDAP) is disordered. The span at 373 to 383 (KVQTDGGQSAS) shows a compositional bias: polar residues. Residues 416-423 (FSAETRMS) and Lys-435 contribute to the ATP site. The Mg(2+) site is built by Asp-554 and Asp-558. 3 helical membrane-spanning segments follow: residues 624–644 (FVLL…MDIL), 652–672 (AVTA…PLAL), and 698–718 (LIAP…LGVF).

Belongs to the cation transport ATPase (P-type) (TC 3.A.3) family. Type IA subfamily. The system is composed of three essential subunits: KdpA, KdpB and KdpC. The complex also contains KdpF, a small non-essential subunit.

The protein resides in the cell membrane. It catalyses the reaction K(+)(out) + ATP + H2O = K(+)(in) + ADP + phosphate + H(+). Functionally, part of the high-affinity ATP-driven potassium transport (or Kdp) system, which catalyzes the hydrolysis of ATP coupled with the electrogenic transport of potassium into the cytoplasm. This subunit is responsible for energy coupling to the transport system and for the release of the potassium ions to the cytoplasm. The Kdp system is essential for growth under K(+) limitation, and for survival under desiccation and salt crystal inclusion. In Halobacterium salinarum (strain ATCC 29341 / DSM 671 / R1), this protein is Potassium-transporting ATPase ATP-binding subunit.